We begin with the raw amino-acid sequence, 1302 residues long: 1-phosphatidylinositol 4,5-bisphosphate phosphodiesterase gamma-1 (1302 aa).

Ala2 bears the N-acetylalanine mark. One can recognise a PH 1 domain in the interval 27 to 142; sequence RSLEVGTVMT…WIKGLTWLME (116 aa). Positions 152–187 constitute an EF-hand domain; the sequence is QIERWLRKQFYSVDRNREDRISAKDLKNMLSQVNYR. Residues Asp165, Asn167, Glu169, Arg171, and Asp176 each contribute to the Ca(2+) site. The PI-PLC X-box domain occupies 320-464; the sequence is DTMNNPLSHY…LRRKILIKHK (145 aa). Residues His335 and His380 contribute to the active site. One can recognise a PH 2; first part domain in the interval 489-523; it reads SIKNGILYLEDPVNHEWYPHYFVLTSSKIYYSEET. Residue Tyr506 is modified to Phosphotyrosine. The interval 522–545 is disordered; that stretch reads ETSSDQGNEDEEEPKEASSSTELH. 2 SH2 domains span residues 550–657 and 668–756; these read WFHG…SEPV and WYHA…RYPI. Tyr771 carries the post-translational modification Phosphotyrosine; by SYK. Residue Tyr775 is modified to Phosphotyrosine. Tyr783 carries the post-translational modification Phosphotyrosine; by ITK, SYK and TXK. Residues 791 to 851 enclose the SH3 domain; sequence TFKCAVKALF…PSNYVEEMIN (61 aa). The region spanning 895-931 is the PH 2; second part domain; the sequence is FVFSISMPSVAQWSLDVAADSQEELQDWVKKIREVAQ. A PI-PLC Y-box domain is found at 953–1070; that stretch reads LSELVVYCRP…GYVLQPSTMR (118 aa). A Phosphotyrosine modification is found at Tyr977. In terms of domain architecture, C2 spans 1071–1194; it reads DEAFDPFDKS…TGYRAVPLKN (124 aa). Residues Ser1221, Ser1227, Ser1233, and Ser1248 each carry the phosphoserine modification. Tyr1253 bears the Phosphotyrosine mark. At Ser1263 the chain carries Phosphoserine.

As to quaternary structure, interacts (via SH2 domain) with FGFR1, FGFR2, FGFR3 and FGFR4 (phosphorylated). Interacts with RALGPS1. Interacts (via SH2 domains) with VIL1 (phosphorylated at C-terminus tyrosine phosphorylation sites). Interacts (via SH2 domain) with RET. Interacts with AGAP2 via its SH3 domain. Interacts with LAT (phosphorylated) upon TCR activation. Interacts (via SH3 domain) with the Pro-rich domain of TNK1. Associates with BLNK, VAV1, GRB2 and NCK1 in a B-cell antigen receptor-dependent fashion. Interacts with CBLB in activated T-cells; which inhibits phosphorylation. Interacts with SHB. Interacts (via SH3 domain) with the Arg/Gly-rich-flanked Pro-rich domains of KHDRBS1/SAM68. This interaction is selectively regulated by arginine methylation of KHDRBS1/SAM68. Interacts with INPP5D/SHIP1, THEMIS and CLNK. Interacts with FLT4 and KIT. Interacts with AXL. Interacts with SYK; activates PLCG1. Interacts with FLT1 (tyrosine-phosphorylated). Interacts (via SH2 domain) with PDGFRA and PDGFRB (tyrosine phosphorylated). Interacts with PIP5K1C. Interacts with NTRK1 and NTRK2 (phosphorylated upon ligand-binding). Interacts with TESPA1. Interacts with GRB2, LAT and THEMIS upon TCR activation in thymocytes; the association is weaker in the absence of TESPA1. Interacts (via C-terminal proline-rich domain (PRD)) with PLCG1 (via SH3 domain); this interaction leads to guanine nucleotide exchange from PlCG1 to DNM1 and enhances DNM1-dependent endocytosis. The cofactor is Ca(2+). Post-translationally, tyrosine phosphorylated in response to signaling via activated FLT3, KIT and PDGFRA. Tyrosine phosphorylated by activated FGFR1, FGFR2, FGFR3 and FGFR4. Tyrosine phosphorylated by activated FLT1 and KDR. Tyrosine phosphorylated by activated PDGFRB. The receptor-mediated activation of PLCG1 involves its phosphorylation by tyrosine kinases in response to ligation of a variety of growth factor receptors and immune system receptors. For instance, SYK phosphorylates and activates PLCG1 in response to ligation of the B-cell receptor. Phosphorylated by ITK and TXK on Tyr-783 upon TCR activation in T-cells. May be dephosphorylated by PTPRJ. Ubiquitinated by CBLB in activated T-cells.

It localises to the cell projection. The protein resides in the lamellipodium. The protein localises to the ruffle. It catalyses the reaction a 1,2-diacyl-sn-glycero-3-phospho-(1D-myo-inositol-4,5-bisphosphate) + H2O = 1D-myo-inositol 1,4,5-trisphosphate + a 1,2-diacyl-sn-glycerol + H(+). The catalysed reaction is a 1,2-diacyl-sn-glycero-3-phospho-(1D-myo-inositol) + H2O = 1D-myo-inositol 1-phosphate + a 1,2-diacyl-sn-glycerol + H(+). With respect to regulation, activated by phosphorylation on tyrosine residues. Its function is as follows. Mediates the production of the second messenger molecules diacylglycerol (DAG) and inositol 1,4,5-trisphosphate (IP3). Plays an important role in the regulation of intracellular signaling cascades. Becomes activated in response to ligand-mediated activation of receptor-type tyrosine kinases, such as PDGFRA, PDGFRB, EGFR, FGFR1, FGFR2, FGFR3 and FGFR4. Plays a role in actin reorganization and cell migration. Guanine nucleotide exchange factor that binds the GTPase DNM1 and catalyzes the dissociation of GDP, allowing a GTP molecule to bind in its place, therefore enhancing DNM1-dependent endocytosis. This is 1-phosphatidylinositol 4,5-bisphosphate phosphodiesterase gamma-1 from Mus musculus (Mouse).